The primary structure comprises 378 residues: Septin-5 (378 aa).

Residues 50–323 enclose the Septin-type G domain; that stretch reads KGFDFTLMVA…ENYRAHCIQQ (274 aa). Positions 60-67 are G1 motif; it reads GESGLGKS. GTP-binding positions include 60–67, threonine 94, and glycine 120; that span reads GESGLGKS. Residues 117 to 120 form a G3 motif region; sequence DTPG. An Omega-N-methylarginine modification is found at arginine 177. Positions 198–201 are G4 motif; the sequence is AKAD. 199 to 207 provides a ligand contact to GTP; the sequence is KADCLVPSE. Serine 234 carries the phosphoserine modification. Residues glycine 257 and arginine 272 each contribute to the GTP site. A Phosphoserine modification is found at serine 336. Threonine 345 is subject to Phosphothreonine. Positions 347–378 form a coiled coil; sequence DAETEKLIRMKDEELRRMQEMLQRMKQQMQDQ.

This sequence belongs to the TRAFAC class TrmE-Era-EngA-EngB-Septin-like GTPase superfamily. Septin GTPase family. In terms of assembly, septins polymerize into heterooligomeric protein complexes that form filaments, and can associate with cellular membranes, actin filaments and microtubules. GTPase activity is required for filament formation. Interacts with SEPTIN2 and SEPTIN5. In platelets, associated with a complex containing STX4. Interacts with PRKN; this interaction leads to SEPTIN5 ubiquitination and degradation. Interacts with DYRK1A. Interacts with STX1A; in the cerebellar cortex. In terms of processing, phosphorylated by DYRK1A.

It localises to the cytoplasm. The protein resides in the cytoskeleton. In terms of biological role, filament-forming cytoskeletal GTPase. May play a role in cytokinesis (Potential). May play a role in platelet secretion. The protein is Septin-5 of Macaca fascicularis (Crab-eating macaque).